Reading from the N-terminus, the 209-residue chain is MSERGLLIVFSGPSGVGKGTVRQEIFSTPDHKFDYSVSMTTRPQRPGEVDGVDYFFRTREEFEALIKEGQMLEYAEYVGNYYGTPLSYVNETLDKGIDVFLEIEVQGALQVKSKVPDGVFIFLTPPDLEELEERLVGRGTDSPEVIAQRIERAKEEIALMREYDYAVVNDQVSLAAERVKRVIEAEHYRVDRVIGRYTNMVKETDKKLS.

The Guanylate kinase-like domain occupies 5–184; it reads GLLIVFSGPS…AAERVKRVIE (180 aa). Residue 12 to 19 participates in ATP binding; sequence GPSGVGKG.

Belongs to the guanylate kinase family.

It is found in the cytoplasm. It catalyses the reaction GMP + ATP = GDP + ADP. Functionally, essential for recycling GMP and indirectly, cGMP. This chain is Guanylate kinase, found in Streptococcus agalactiae serotype Ia (strain ATCC 27591 / A909 / CDC SS700).